The sequence spans 542 residues: Beta-fructofuranosidase, insoluble isoenzyme 5 (542 aa).

Substrate contacts are provided by residues 50 to 53 (WQND), Gln-69, Trp-77, and 114 to 115 (WS). The active site involves Asp-53. N-linked (GlcNAc...) asparagine glycosylation occurs at Asn-142. Residues 178–179 (RD) and Glu-233 each bind substrate. The cysteines at positions 389 and 436 are disulfide-linked. N-linked (GlcNAc...) asparagine glycosylation is found at Asn-510 and Asn-516.

This sequence belongs to the glycosyl hydrolase 32 family. As to expression, expressed in roots and leaves.

It is found in the secreted. It localises to the extracellular space. The protein localises to the apoplast. Its subcellular location is the cell wall. It carries out the reaction Hydrolysis of terminal non-reducing beta-D-fructofuranoside residues in beta-D-fructofuranosides.. Its function is as follows. May play a role in stress response. The polypeptide is Beta-fructofuranosidase, insoluble isoenzyme 5 (CIN5) (Oryza sativa subsp. japonica (Rice)).